The sequence spans 274 residues: 4-diphosphocytidyl-2-C-methyl-D-erythritol kinase (274 aa).

The active site involves K8. Position 94–104 (94–104 (PSGAGLGGGSA)) interacts with ATP. The active site involves D136.

This sequence belongs to the GHMP kinase family. IspE subfamily.

The enzyme catalyses 4-CDP-2-C-methyl-D-erythritol + ATP = 4-CDP-2-C-methyl-D-erythritol 2-phosphate + ADP + H(+). It functions in the pathway isoprenoid biosynthesis; isopentenyl diphosphate biosynthesis via DXP pathway; isopentenyl diphosphate from 1-deoxy-D-xylulose 5-phosphate: step 3/6. Functionally, catalyzes the phosphorylation of the position 2 hydroxy group of 4-diphosphocytidyl-2C-methyl-D-erythritol. In Bacteroides fragilis (strain ATCC 25285 / DSM 2151 / CCUG 4856 / JCM 11019 / LMG 10263 / NCTC 9343 / Onslow / VPI 2553 / EN-2), this protein is 4-diphosphocytidyl-2-C-methyl-D-erythritol kinase.